A 508-amino-acid chain; its full sequence is Monocarboxylate transporter 9 (508 aa).

Over 1 to 12 (MEFQKSPDGGWG) the chain is Cytoplasmic. A run of 12 helical transmembrane segments spans residues 13 to 33 (WVIV…PLAV), 53 to 73 (WVGS…SLFV), 80 to 100 (PVTI…SLAP), 102 to 122 (IYFL…LLYT), 137 to 157 (GLAL…YAAL), 164 to 184 (FYGL…ILAC), 303 to 323 (VFSA…PPSL), 341 to 361 (MPLI…LGIL), 370 to 390 (LYLY…IPFA), 396 to 416 (LAIL…FPYV), 431 to 451 (GILM…VGWF), and 460 to 480 (IAFY…LLAI). Over 481-508 (LPCWDMCNKKLPKPAVPTTFFYKVASNV) the chain is Cytoplasmic.

The protein belongs to the major facilitator superfamily. Monocarboxylate porter (TC 2.A.1.13) family.

Its subcellular location is the cell membrane. It carries out the reaction creatine(in) = creatine(out). The enzyme catalyses (R)-carnitine(in) = (R)-carnitine(out). Functionally, extracellular pH-and Na(+)-sensitive low-affinity creatine transporter. Also functions as a pH-independent carnitine efflux transporter. This chain is Monocarboxylate transporter 9 (Slc16a9), found in Mus musculus (Mouse).